The primary structure comprises 316 residues: NADH-quinone oxidoreductase subunit H (316 aa).

The next 8 membrane-spanning stretches (helical) occupy residues 6-26 (PAVV…LIWV), 74-94 (FVIA…VVPF), 98-118 (VGVI…SLAV), 145-165 (ISYE…AGSF), 177-197 (GWYV…AVAE), 233-253 (YLGI…GWLG), 256-276 (FLPP…FFIL), and 296-316 (VMLP…LSVP).

It belongs to the complex I subunit 1 family. NDH-1 is composed of 14 different subunits. Subunits NuoA, H, J, K, L, M, N constitute the membrane sector of the complex.

It is found in the cell inner membrane. It carries out the reaction a quinone + NADH + 5 H(+)(in) = a quinol + NAD(+) + 4 H(+)(out). NDH-1 shuttles electrons from NADH, via FMN and iron-sulfur (Fe-S) centers, to quinones in the respiratory chain. The immediate electron acceptor for the enzyme in this species is believed to be ubiquinone. Couples the redox reaction to proton translocation (for every two electrons transferred, four hydrogen ions are translocated across the cytoplasmic membrane), and thus conserves the redox energy in a proton gradient. This subunit may bind ubiquinone. In Methylococcus capsulatus (strain ATCC 33009 / NCIMB 11132 / Bath), this protein is NADH-quinone oxidoreductase subunit H.